The sequence spans 397 residues: Gastric triacylglycerol lipase (397 aa).

An N-terminal signal peptide occupies residues 1–19; the sequence is MWWLLVTVCFIHMSGNAFC. N-linked (GlcNAc...) asparagine glycosylation occurs at asparagine 33. Residues 77–376 enclose the AB hydrolase-1 domain; sequence PVVFLQHGLL…PNYNHLDFIW (300 aa). Serine 171 acts as the Nucleophile in catalysis. Cysteine 245 and cysteine 254 are joined by a disulfide. N-linked (GlcNAc...) asparagine glycosylation is found at asparagine 270 and asparagine 326. Residues aspartate 342 and histidine 371 each act as charge relay system in the active site.

Belongs to the AB hydrolase superfamily. Lipase family.

Its subcellular location is the secreted. The enzyme catalyses a triacylglycerol + H2O = a diacylglycerol + a fatty acid + H(+). It carries out the reaction 1,2,3-tri-(9Z-octadecenoyl)-glycerol + H2O = 1,2-di-(9Z-octadecenoyl)-sn-glycerol + (9Z)-octadecenoate + H(+). It catalyses the reaction 1,2,3-trioctanoylglycerol + H2O = 1,2-dioctanoyl-sn-glycerol + octanoate + H(+). Its activity is regulated as follows. Inhibited by diethylp-nitrophenyl phosphate but not inhibited by thiol reagents 5,5'-dithiobis(2-nitrobenzoic acid) or 4,4'-dithiopyridine. In terms of biological role, catalyzes the hydrolysis of triacylglycerols to yield free fatty acids, diacylglycerol, monoacylglycerol, and glycerol. Shows a preferential hydrolysis at the sn-3 position of triacylglycerol. This is Gastric triacylglycerol lipase (LIPF) from Bos taurus (Bovine).